The following is a 190-amino-acid chain: Probable thymidylate kinase (190 aa).

An ATP-binding site is contributed by 9–16; sequence GIDGAGKT.

The protein belongs to the thymidylate kinase family.

The enzyme catalyses dTMP + ATP = dTDP + ADP. This chain is Probable thymidylate kinase (tmk1), found in Sulfurisphaera tokodaii (strain DSM 16993 / JCM 10545 / NBRC 100140 / 7) (Sulfolobus tokodaii).